A 418-amino-acid chain; its full sequence is 26S proteasome regulatory subunit 6B (418 aa).

Met-1 is subject to N-acetylmethionine. Ser-21 bears the Phosphoserine mark. Thr-25 carries the phosphothreonine modification. The residue at position 28 (Ser-28) is a Phosphoserine. An ATP-binding site is contributed by Gly-206–Thr-213. N6-acetyllysine occurs at positions 397 and 401.

It belongs to the AAA ATPase family. Component of the 19S proteasome regulatory particle complex. The 26S proteasome consists of a 20S core particle (CP) and two 19S regulatory subunits (RP). The regulatory particle is made of a lid composed of 9 subunits, a base containing 6 ATPases including PSMC4 and few additional components. Interacts with NR1I3. Interacts with PAAF1. Interacts with TRIM5. Interacts with ZFAND1.

The protein resides in the cytoplasm. It localises to the nucleus. Functionally, component of the 26S proteasome, a multiprotein complex involved in the ATP-dependent degradation of ubiquitinated proteins. This complex plays a key role in the maintenance of protein homeostasis by removing misfolded or damaged proteins, which could impair cellular functions, and by removing proteins whose functions are no longer required. Therefore, the proteasome participates in numerous cellular processes, including cell cycle progression, apoptosis, or DNA damage repair. PSMC4 belongs to the heterohexameric ring of AAA (ATPases associated with diverse cellular activities) proteins that unfolds ubiquitinated target proteins that are concurrently translocated into a proteolytic chamber and degraded into peptides. The protein is 26S proteasome regulatory subunit 6B (Psmc4) of Mus musculus (Mouse).